The sequence spans 186 residues: Ribosome-recycling factor (186 aa).

A disordered region spans residues 135-164 (DGMDDLKKAEKDGEIGQDESRAQSERVQKM).

The protein belongs to the RRF family.

The protein resides in the cytoplasm. Responsible for the release of ribosomes from messenger RNA at the termination of protein biosynthesis. May increase the efficiency of translation by recycling ribosomes from one round of translation to another. This chain is Ribosome-recycling factor, found in Sinorhizobium medicae (strain WSM419) (Ensifer medicae).